Consider the following 221-residue polypeptide: Urease accessory protein UreF (221 aa).

The protein belongs to the UreF family. UreD, UreF and UreG form a complex that acts as a GTP-hydrolysis-dependent molecular chaperone, activating the urease apoprotein by helping to assemble the nickel containing metallocenter of UreC. The UreE protein probably delivers the nickel.

It is found in the cytoplasm. In terms of biological role, required for maturation of urease via the functional incorporation of the urease nickel metallocenter. The sequence is that of Urease accessory protein UreF from Aliivibrio fischeri (strain MJ11) (Vibrio fischeri).